The following is a 473-amino-acid chain: Phosphatidylserine synthase 1 (473 aa).

Topologically, residues 1 to 35 (MAACVGSRTLSKDDVNYRLHFRMINEQQVEDITLE) are cytoplasmic. Residues 36-56 (FFYRPHTITLLSFTILSLMAF) traverse the membrane as a helical segment. Residues 57-72 (AFTRDDSVPEENIWRG) lie on the Lumenal side of the membrane. Residues 73–93 (ILSVIFFFLIISVLAFPNGPF) traverse the membrane as a helical segment. The Cytoplasmic portion of the chain corresponds to 94-102 (TRPHPAIWR). Residues 103–123 (MVFGLSVLYFLFLVFVLFLNF) form a helical membrane-spanning segment. Topologically, residues 124–186 (EQVKAVMYWL…AMKALLIRSY (63 aa)) are lumenal. Residues 187 to 207 (GLCWTISITWELTELFFMHLL) traverse the membrane as a helical segment. At 208-216 (PNFAECWWD) the chain is on the cytoplasmic side. A helical membrane pass occupies residues 217–237 (QVILDILLCNGGGIWLGMVVC). Topologically, residues 238–286 (RFLEMRTYHWASFKDIHTTTGKIKRAVLQFTPASWTYVRWFDPKSSFQR) are lumenal. Residues 287–307 (VAGIYLFMIIWQLTELNTFFL) traverse the membrane as a helical segment. Topologically, residues 308-319 (KHIFVFQASHPL) are cytoplasmic. Residues 320–342 (SWGRILFIGIITAPTVRQYYAYL) form a helical membrane-spanning segment. The Lumenal segment spans residues 343 to 355 (TDTQCKRVGTQCW). The helical transmembrane segment at 356-376 (VFGVIAFLEAIVCIKFGQDLF) threads the bilayer. The Cytoplasmic segment spans residues 377 to 380 (SKTQ). Residues 381–401 (ILYVVFWLLCVAFTTFLCLYG) form a helical membrane-spanning segment. Residues 402–473 (MVWYAEYYGH…SKVTNGIGKK (72 aa)) lie on the Lumenal side of the membrane. The segment at 420 to 473 (EDSPYSPDASWLHSKFSKGADNSPPKHPVNSESHSSRRRNRHSRSKVTNGIGKK) is disordered. Positions 455 to 464 (SRRRNRHSRS) are enriched in basic residues.

This sequence belongs to the phosphatidyl serine synthase family.

The protein localises to the endoplasmic reticulum membrane. It catalyses the reaction a 1,2-diacyl-sn-glycero-3-phosphoethanolamine + L-serine = a 1,2-diacyl-sn-glycero-3-phospho-L-serine + ethanolamine. The enzyme catalyses a 1,2-diacyl-sn-glycero-3-phosphocholine + L-serine = a 1,2-diacyl-sn-glycero-3-phospho-L-serine + choline. Its pathway is phospholipid metabolism; phosphatidylserine biosynthesis. Catalyzes a base-exchange reaction in which the polar head group of phosphatidylethanolamine (PE) or phosphatidylcholine (PC) is replaced by L-serine. Catalyzes mainly the conversion of phosphatidylcholine but also converts, in vitro and to a lesser extent, phosphatidylethanolamine. The sequence is that of Phosphatidylserine synthase 1 (PTDSS1) from Gallus gallus (Chicken).